The following is a 720-amino-acid chain: Pollen receptor-like kinase 1 (720 aa).

Residues 40-64 form an LRR 1; degenerate repeat; that stretch reads LCSRGHLLIIFLLLVSPFNDAAVDV. An LRR 2; degenerate repeat occupies 123-146; it reads LGVLCYEGDVWGLQLENLDLSGVI. 3 LRR repeats span residues 154-179, 226-248, and 249-273; these read LHFL…SLEP, LPQV…HFPP, and NVLK…SLMD. The segment at 288–319 is disordered; that stretch reads LESACNSPSQEANNPDSRNSSTISGQSSTDVI. Over residues 291 to 317 the composition is skewed to polar residues; the sequence is ACNSPSQEANNPDSRNSSTISGQSSTD. The helical transmembrane segment at 330–350 threads the bilayer; it reads MLIVAVCLVVLCLLIVLILII. Polar residues-rich tracts occupy residues 356-382 and 389-405; these read SSSQ…TSSA and LSGN…NSNK. The disordered stretch occupies residues 356–409; it reads SSSQNPQPVESNYSNNDRDQNAFTSSAPDDHVTLSGNSTYSNNQHSNSNKAEAP. The region spanning 434-702 is the Protein kinase domain; that stretch reads RASAEVLGSG…KEVVQSIQSL (269 aa). ATP is bound by residues 440 to 448 and K462; that span reads LGSGNLGSS.

This sequence belongs to the protein kinase superfamily. In terms of assembly, interacts with KIP1. Post-translationally, autophosphorylated. Expressed in mature pollen grains and pollen tubes, but not in style, petal, leaf, root or sepal. Very low expression in the ovary.

It is found in the microsome membrane. It localises to the cytoplasm. The enzyme catalyses L-seryl-[protein] + ATP = O-phospho-L-seryl-[protein] + ADP + H(+). The catalysed reaction is L-threonyl-[protein] + ATP = O-phospho-L-threonyl-[protein] + ADP + H(+). It carries out the reaction L-tyrosyl-[protein] + ATP = O-phospho-L-tyrosyl-[protein] + ADP + H(+). Its function is as follows. Dual-specificity kinase with both serine/threonine and tyrosine kinase activities. Required for postmeiotic development of microspores. Involved in embryo sac development at the late stages of megagametogenesis. Involved in the phosphorylation of KIP1. The chain is Pollen receptor-like kinase 1 from Petunia integrifolia (Violet-flowered petunia).